The chain runs to 128 residues: Small ribosomal subunit protein uS9 (128 aa).

The protein belongs to the universal ribosomal protein uS9 family. Part of the 30S ribosomal subunit. Contacts proteins S7 and S10.

Part of the top of the head of the 30S subunit. The C-terminal region penetrates the head emerging in the P-site where it contacts tRNA. This Thermus thermophilus (strain ATCC BAA-163 / DSM 7039 / HB27) protein is Small ribosomal subunit protein uS9 (rpsI).